We begin with the raw amino-acid sequence, 222 residues long: Putative cobalt transport protein CbiM (222 aa).

The next 6 membrane-spanning stretches (helical) occupy residues Leu8–Ile28, Pro43–Val63, Leu75–Phe95, Thr107–Phe127, Leu134–Thr154, and Ile178–Trp198.

It belongs to the CbiM family. As to quaternary structure, forms an energy-coupling factor (ECF) transporter complex composed of an ATP-binding protein (A component, CbiO), a transmembrane protein (T component, CbiQ) and 2 possible substrate-capture proteins (S components, CbiM and CbiN) of unknown stoichimetry.

The protein localises to the cell membrane. Its pathway is cofactor biosynthesis; adenosylcobalamin biosynthesis. Functionally, part of the energy-coupling factor (ECF) transporter complex CbiMNOQ involved in cobalt import. The polypeptide is Putative cobalt transport protein CbiM (Methanococcus voltae (strain ATCC BAA-1334 / A3)).